The primary structure comprises 698 residues: RNA cytosine-C(5)-methyltransferase NSUN2 (698 aa).

The segment covering 1–10 (MGRKNRRNRQ) has biased composition (basic residues). The disordered stretch occupies residues 1–28 (MGRKNRRNRQRRTEQRSPAEEERRKARE). Over residues 11-28 (RRTEQRSPAEEERRKARE) the composition is skewed to basic and acidic residues. S-adenosyl-L-methionine contacts are provided by residues 182-188 (CAAPGSK), Asp213, Asp240, and Asp266. Cys319 functions as the Nucleophile in the catalytic mechanism. A disordered region spans residues 472 to 496 (AVDAENGETKPCTNQSGSSKTDSVC). Residues 482-493 (PCTNQSGSSKTD) show a composition bias toward polar residues.

It belongs to the class I-like SAM-binding methyltransferase superfamily. RsmB/NOP family. TRM4 subfamily.

It is found in the nucleus. Its subcellular location is the nucleolus. It localises to the cytoplasm. The protein resides in the mitochondrion. The protein localises to the cytoskeleton. It is found in the spindle. Its subcellular location is the secreted. It localises to the extracellular exosome. The enzyme catalyses cytidine(48) in tRNA + S-adenosyl-L-methionine = 5-methylcytidine(48) in tRNA + S-adenosyl-L-homocysteine + H(+). It catalyses the reaction cytidine(49) in tRNA + S-adenosyl-L-methionine = 5-methylcytidine(49) in tRNA + S-adenosyl-L-homocysteine + H(+). The catalysed reaction is cytidine(50) in tRNA + S-adenosyl-L-methionine = 5-methylcytidine(50) in tRNA + S-adenosyl-L-homocysteine + H(+). It carries out the reaction cytidine(34) in tRNA precursor + S-adenosyl-L-methionine = 5-methylcytidine(34) in tRNA precursor + S-adenosyl-L-homocysteine + H(+). The enzyme catalyses a cytidine in mRNA + S-adenosyl-L-methionine = a 5-methylcytidine in mRNA + S-adenosyl-L-homocysteine + H(+). Functionally, RNA cytosine C(5)-methyltransferase that methylates cytosine to 5-methylcytosine (m5C) in various RNAs, such as tRNAs, mRNAs and some long non-coding RNAs (lncRNAs). Involved in various processes, such as epidermal stem cell differentiation, testis differentiation and maternal to zygotic transition during early development: acts by increasing protein synthesis; cytosine C(5)-methylation promoting tRNA stability and preventing mRNA decay. Methylates cytosine to 5-methylcytosine (m5C) at positions 34 and 48 of intron-containing tRNA(Leu)(CAA) precursors, and at positions 48, 49 and 50 of tRNA(Gly)(GCC) precursors. tRNA methylation is required generation of RNA fragments derived from tRNAs (tRFs). Also mediates C(5)-methylation of mitochondrial tRNAs. Catalyzes cytosine C(5)-methylation of mRNAs, leading to stabilize them and prevent mRNA decay. Cytosine C(5)-methylation of mRNAs also regulates mRNA export. Also mediates cytosine C(5)-methylation of non-coding RNAs, such as vault RNAs (vtRNAs), promoting their processing into regulatory small RNAs. Required for proper spindle assembly and chromosome segregation, independently of its methyltransferase activity. This chain is RNA cytosine-C(5)-methyltransferase NSUN2, found in Xenopus laevis (African clawed frog).